The primary structure comprises 290 residues: 2-hydroxy-6-oxo-6-(2'-aminophenyl)hexa-2,4-dienoic acid hydrolase (290 aa).

Active-site residues include Ser-114, Asp-233, and His-261.

Belongs to the DmpD/TodF/XylF esterase family. Homodimer.

It catalyses the reaction (2E,4E)-6-(2-aminophenyl)-2-hydroxy-6-oxohexa-2,4-dienoate + H2O = (2E)-2-hydroxypenta-2,4-dienoate + anthranilate + H(+). It participates in xenobiotic degradation; carbazole degradation. Involved in the degradation of carbazole, a toxic N-heterocyclic aromatic compound containing dibenzopyrrole system. Catalyzes the hydrolytic cleavage of a carbon-carbon bond of 2-hydroxy-6-oxo-6-(2'-aminophenyl)hexa-2,4-dienoic acid (HOPDA) to yield anthranilate. CarC is specific for 2-hydroxy-6-oxo-6-phenylhexa-2,4-dienoic acid (6-phenyl-HODA), and has little activity toward 2-hydroxy-6-oxohepta-2,4-dienoic acid and 2-hydroxymuconic semialdehyde. The effect of the presence of an amino group or hydroxyl group at the 2'-position of phenyl moiety of 6-phenyl-HODA on the enzyme activity is found to be small. In Metapseudomonas resinovorans (Pseudomonas resinovorans), this protein is 2-hydroxy-6-oxo-6-(2'-aminophenyl)hexa-2,4-dienoic acid hydrolase (carC).